Reading from the N-terminus, the 373-residue chain is NADPH-dependent 3-keto-steroid reductase Hsd3b5 (373 aa).

Residues G10–L15, Y155, and K159 each bind NADP(+). K159 acts as the Proton donor in catalysis. Residues L288–F308 traverse the membrane as a helical segment. At K350 the chain carries N6-acetyllysine.

This sequence belongs to the 3-beta-HSD family. As to expression, expressed predominantly in male liver.

Its subcellular location is the endoplasmic reticulum membrane. It localises to the mitochondrion membrane. The catalysed reaction is a 3beta-hydroxysteroid + NADP(+) = a 3-oxosteroid + NADPH + H(+). The enzyme catalyses 5alpha-androstane-3beta,17beta-diol + NADP(+) = 17beta-hydroxy-5alpha-androstan-3-one + NADPH + H(+). It carries out the reaction 3beta-hydroxy-5alpha-androstan-17-one + NADP(+) = 5alpha-androstan-3,17-dione + NADPH + H(+). It functions in the pathway steroid metabolism. Its function is as follows. Responsible for the reduction of the oxo group on the C-3 of 5alpha-androstane steroids. Catalyzes the conversion of dihydrotestosterone to its inactive form 5alpha-androstanediol, that does not bind androgen receptor/AR. Also converts androstanedione, a precursor of testosterone and estrone, to epiandrosterone. Does not function as an isomerase. The sequence is that of NADPH-dependent 3-keto-steroid reductase Hsd3b5 from Rattus norvegicus (Rat).